The sequence spans 176 residues: Peptide deformylase (176 aa).

Fe cation-binding residues include Cys94 and His136. Glu137 is an active-site residue. His140 lines the Fe cation pocket.

The protein belongs to the polypeptide deformylase family. Fe(2+) is required as a cofactor.

It carries out the reaction N-terminal N-formyl-L-methionyl-[peptide] + H2O = N-terminal L-methionyl-[peptide] + formate. Removes the formyl group from the N-terminal Met of newly synthesized proteins. Requires at least a dipeptide for an efficient rate of reaction. N-terminal L-methionine is a prerequisite for activity but the enzyme has broad specificity at other positions. The sequence is that of Peptide deformylase from Bartonella quintana (strain Toulouse) (Rochalimaea quintana).